The sequence spans 122 residues: Large ribosomal subunit protein uL14 (122 aa).

The protein belongs to the universal ribosomal protein uL14 family. In terms of assembly, part of the 50S ribosomal subunit. Forms a cluster with proteins L3 and L19. In the 70S ribosome, L14 and L19 interact and together make contacts with the 16S rRNA in bridges B5 and B8.

In terms of biological role, binds to 23S rRNA. Forms part of two intersubunit bridges in the 70S ribosome. The polypeptide is Large ribosomal subunit protein uL14 (Streptococcus equi subsp. equi (strain 4047)).